The primary structure comprises 588 residues: DNA ligase (588 aa).

Glutamate 248 contributes to the ATP binding site. Lysine 250 functions as the N6-AMP-lysine intermediate in the catalytic mechanism. Residues arginine 255, arginine 270, glutamate 300, phenylalanine 341, arginine 418, and lysine 424 each contribute to the ATP site.

It belongs to the ATP-dependent DNA ligase family. Requires Mg(2+) as cofactor.

It catalyses the reaction ATP + (deoxyribonucleotide)n-3'-hydroxyl + 5'-phospho-(deoxyribonucleotide)m = (deoxyribonucleotide)n+m + AMP + diphosphate.. DNA ligase that seals nicks in double-stranded DNA during DNA replication, DNA recombination and DNA repair. The protein is DNA ligase of Thermoplasma volcanium (strain ATCC 51530 / DSM 4299 / JCM 9571 / NBRC 15438 / GSS1).